Reading from the N-terminus, the 294-residue chain is ATP phosphoribosyltransferase (294 aa).

Belongs to the ATP phosphoribosyltransferase family. Long subfamily. Mg(2+) is required as a cofactor.

It is found in the cytoplasm. The catalysed reaction is 1-(5-phospho-beta-D-ribosyl)-ATP + diphosphate = 5-phospho-alpha-D-ribose 1-diphosphate + ATP. Its pathway is amino-acid biosynthesis; L-histidine biosynthesis; L-histidine from 5-phospho-alpha-D-ribose 1-diphosphate: step 1/9. Feedback inhibited by histidine. Its function is as follows. Catalyzes the condensation of ATP and 5-phosphoribose 1-diphosphate to form N'-(5'-phosphoribosyl)-ATP (PR-ATP). Has a crucial role in the pathway because the rate of histidine biosynthesis seems to be controlled primarily by regulation of HisG enzymatic activity. The protein is ATP phosphoribosyltransferase of Chlorobium phaeobacteroides (strain DSM 266 / SMG 266 / 2430).